Consider the following 574-residue polypeptide: Septation ring formation regulator EzrA (574 aa).

The Extracellular portion of the chain corresponds to 1-7 (MSSGIIL). The chain crosses the membrane as a helical span at residues 8-26 (LIVAIVLLVIIAYLVGVII). At 27 to 574 (RKRNDSLITS…YEKTREHIRF (548 aa)) the chain is on the cytoplasmic side. Coiled-coil stretches lie at residues 102-141 (NFIR…EEKN), 274-350 (ELVT…ETES), and 459-520 (QLEA…SFEA).

Belongs to the EzrA family.

It localises to the cell membrane. Functionally, negative regulator of FtsZ ring formation; modulates the frequency and position of FtsZ ring formation. Inhibits FtsZ ring formation at polar sites. Interacts either with FtsZ or with one of its binding partners to promote depolymerization. In Streptococcus pyogenes serotype M3 (strain SSI-1), this protein is Septation ring formation regulator EzrA.